The primary structure comprises 349 residues: S-adenosylmethionine:tRNA ribosyltransferase-isomerase (349 aa).

It belongs to the QueA family. In terms of assembly, monomer.

The protein localises to the cytoplasm. The enzyme catalyses 7-aminomethyl-7-carbaguanosine(34) in tRNA + S-adenosyl-L-methionine = epoxyqueuosine(34) in tRNA + adenine + L-methionine + 2 H(+). The protein operates within tRNA modification; tRNA-queuosine biosynthesis. Transfers and isomerizes the ribose moiety from AdoMet to the 7-aminomethyl group of 7-deazaguanine (preQ1-tRNA) to give epoxyqueuosine (oQ-tRNA). This chain is S-adenosylmethionine:tRNA ribosyltransferase-isomerase, found in Ruegeria pomeroyi (strain ATCC 700808 / DSM 15171 / DSS-3) (Silicibacter pomeroyi).